The sequence spans 59 residues: Membrane-associated ATPase epsilon chain (59 aa).

To E.hirae NtpH. Sul-ATPase is composed of six (or maybe five) subunits: alpha, beta, delta, gamma, C (proteolipid), and possibly epsilon.

The catalysed reaction is ATP + H2O + 4 H(+)(in) = ADP + phosphate + 5 H(+)(out). This Sulfurisphaera tokodaii (strain DSM 16993 / JCM 10545 / NBRC 100140 / 7) (Sulfolobus tokodaii) protein is Membrane-associated ATPase epsilon chain (atpE).